Consider the following 291-residue polypeptide: Acetyl-coenzyme A carboxylase carboxyl transferase subunit beta (291 aa).

The CoA carboxyltransferase N-terminal domain occupies 29-291; it reads IMTKCPQCKK…TGGEREWLEN (263 aa). The Zn(2+) site is built by Cys33, Cys36, Cys52, and Cys55. The segment at 33–55 adopts a C4-type zinc-finger fold; it reads CPQCKKIMLTKELDKNLRVCMNC.

It belongs to the AccD/PCCB family. In terms of assembly, acetyl-CoA carboxylase is a heterohexamer composed of biotin carboxyl carrier protein (AccB), biotin carboxylase (AccC) and two subunits each of ACCase subunit alpha (AccA) and ACCase subunit beta (AccD). Zn(2+) serves as cofactor.

It localises to the cytoplasm. The enzyme catalyses N(6)-carboxybiotinyl-L-lysyl-[protein] + acetyl-CoA = N(6)-biotinyl-L-lysyl-[protein] + malonyl-CoA. It participates in lipid metabolism; malonyl-CoA biosynthesis; malonyl-CoA from acetyl-CoA: step 1/1. Functionally, component of the acetyl coenzyme A carboxylase (ACC) complex. Biotin carboxylase (BC) catalyzes the carboxylation of biotin on its carrier protein (BCCP) and then the CO(2) group is transferred by the transcarboxylase to acetyl-CoA to form malonyl-CoA. This Bacillus pumilus (strain SAFR-032) protein is Acetyl-coenzyme A carboxylase carboxyl transferase subunit beta.